We begin with the raw amino-acid sequence, 129 residues long: Small ribosomal subunit protein uS11 (129 aa).

A disordered region spans residues 108 to 129; that stretch reads TPIPHNGTRPPKRVLKRLRLKK. Basic residues predominate over residues 117 to 129; that stretch reads PPKRVLKRLRLKK.

Belongs to the universal ribosomal protein uS11 family. In terms of assembly, part of the 30S ribosomal subunit. Interacts with proteins S7 and S18. Binds to IF-3.

Its function is as follows. Located on the platform of the 30S subunit, it bridges several disparate RNA helices of the 16S rRNA. Forms part of the Shine-Dalgarno cleft in the 70S ribosome. This chain is Small ribosomal subunit protein uS11, found in Mycoplasmopsis synoviae (strain 53) (Mycoplasma synoviae).